The sequence spans 382 residues: UDP-4-amino-4-deoxy-L-arabinose--oxoglutarate aminotransferase (382 aa).

The residue at position 183 (lysine 183) is an N6-(pyridoxal phosphate)lysine.

Belongs to the DegT/DnrJ/EryC1 family. ArnB subfamily. In terms of assembly, homodimer. Requires pyridoxal 5'-phosphate as cofactor.

The enzyme catalyses UDP-4-amino-4-deoxy-beta-L-arabinose + 2-oxoglutarate = UDP-beta-L-threo-pentopyranos-4-ulose + L-glutamate. It participates in nucleotide-sugar biosynthesis; UDP-4-deoxy-4-formamido-beta-L-arabinose biosynthesis; UDP-4-deoxy-4-formamido-beta-L-arabinose from UDP-alpha-D-glucuronate: step 2/3. The protein operates within bacterial outer membrane biogenesis; lipopolysaccharide biosynthesis. Catalyzes the conversion of UDP-4-keto-arabinose (UDP-Ara4O) to UDP-4-amino-4-deoxy-L-arabinose (UDP-L-Ara4N). The modified arabinose is attached to lipid A and is required for resistance to polymyxin and cationic antimicrobial peptides. The sequence is that of UDP-4-amino-4-deoxy-L-arabinose--oxoglutarate aminotransferase from Pseudomonas syringae pv. syringae (strain B728a).